We begin with the raw amino-acid sequence, 445 residues long: N-succinylarginine dihydrolase (445 aa).

Substrate is bound by residues 19 to 28 (AGLSFGNVAS), N110, and 137 to 138 (HR). Residue E174 is part of the active site. R214 provides a ligand contact to substrate. H250 is a catalytic residue. Substrate contacts are provided by D252 and N363. The active-site Nucleophile is C369.

The protein belongs to the succinylarginine dihydrolase family. In terms of assembly, homodimer.

The enzyme catalyses N(2)-succinyl-L-arginine + 2 H2O + 2 H(+) = N(2)-succinyl-L-ornithine + 2 NH4(+) + CO2. Its pathway is amino-acid degradation; L-arginine degradation via AST pathway; L-glutamate and succinate from L-arginine: step 2/5. Functionally, catalyzes the hydrolysis of N(2)-succinylarginine into N(2)-succinylornithine, ammonia and CO(2). In Shewanella piezotolerans (strain WP3 / JCM 13877), this protein is N-succinylarginine dihydrolase.